The sequence spans 273 residues: Endochitinase EP3 (273 aa).

The N-terminal stretch at 1-28 is a signal peptide; the sequence is MLTPTISKSISLVTILLVLQAFSNTTKA. N-linked (GlcNAc...) asparagine glycosylation is present at Asn-24. One can recognise a Chitin-binding type-1 domain in the interval 29-63; the sequence is QNCGCSSELCCSQFGFCGNTSDYCGVGCQQGPCFA. Intrachain disulfides connect Cys-31/Cys-39, Cys-33/Cys-45, Cys-38/Cys-52, and Cys-56/Cys-61. N-linked (GlcNAc...) asparagine glycosylation occurs at Asn-47. A catalytic region spans residues 70–273; the sequence is VSVAEIVTQE…GVDPGNNLTC (204 aa). The active-site Proton donor is the Glu-136. Residues Asn-157 and Asn-270 are each glycosylated (N-linked (GlcNAc...) asparagine).

This sequence belongs to the glycosyl hydrolase 19 family. Chitinase class I subfamily. In terms of tissue distribution, expressed in cells surrounding embryos, stems, seedlings, pollen, roots, shoots, inflorescence, flowers, siliques and leaves. Present in seedpods and seed embryos, but not in roots, inflorescence stems, leaves and flowers.

The enzyme catalyses Random endo-hydrolysis of N-acetyl-beta-D-glucosaminide (1-&gt;4)-beta-linkages in chitin and chitodextrins.. Probably involved in hypersensitive reaction upon Xanthomonas campestris infection. In Arabidopsis thaliana (Mouse-ear cress), this protein is Endochitinase EP3.